The chain runs to 377 residues: tRNA N6-adenosine threonylcarbamoyltransferase (377 aa).

Residues His129 and His133 each coordinate Fe cation. Substrate-binding positions include 151–155 (LVSGG), Asp184, Gly197, and Asn298. Asp326 provides a ligand contact to Fe cation. Positions 358-377 (DGAAAKSDPAIGSGRKGPKA) are disordered.

This sequence belongs to the KAE1 / TsaD family. Fe(2+) serves as cofactor.

The protein localises to the cytoplasm. It carries out the reaction L-threonylcarbamoyladenylate + adenosine(37) in tRNA = N(6)-L-threonylcarbamoyladenosine(37) in tRNA + AMP + H(+). In terms of biological role, required for the formation of a threonylcarbamoyl group on adenosine at position 37 (t(6)A37) in tRNAs that read codons beginning with adenine. Is involved in the transfer of the threonylcarbamoyl moiety of threonylcarbamoyl-AMP (TC-AMP) to the N6 group of A37, together with TsaE and TsaB. TsaD likely plays a direct catalytic role in this reaction. The protein is tRNA N6-adenosine threonylcarbamoyltransferase of Maricaulis maris (strain MCS10) (Caulobacter maris).